The chain runs to 556 residues: Myb/SANT-like DNA-binding domain-containing protein 2 (556 aa).

Polar residues-rich tracts occupy residues 1–10 and 36–45; these read MAASCGSSQL and GNPSLSDPST. The interval 1 to 82 is disordered; the sequence is MAASCGSSQL…GGASPSVSFS (82 aa). The span at 56–74 shows a compositional bias: gly residues; sequence PAAGGAGLGGGGAAGGRGG. Positions 99-169 constitute a Myb-like domain; the sequence is SWTPAETNAL…QCRERIKTLR (71 aa). The tract at residues 431–458 is disordered; it reads PRSPLAEPRGADPSNETPGELEVPSPQA.

The protein is Myb/SANT-like DNA-binding domain-containing protein 2 (MSANTD2) of Gallus gallus (Chicken).